The chain runs to 508 residues: Cell death protein 3 (508 aa).

Positions 1 to 223 are excised as a propeptide; sequence MMRQDRRNLL…FHEEDMNYVD (223 aa). In terms of domain architecture, CARD spans 2-91; that stretch reads MRQDRRNLLE…HELAAVLEPL (90 aa). Disordered stretches follow at residues 106 to 130 and 148 to 184; these read PMSP…TRVH and YTRA…SSAN. Positions 118–127 are enriched in polar residues; it reads LSPSTFSSPT. Positions 171–184 are enriched in low complexity; it reads SPSNSFQSQPSSAN. Residues histidine 317 and cysteine 360 contribute to the active site. Residues 392–407 are required for interaction with ced-4; sequence GPLFNFLGCVRPQAQQ.

It belongs to the peptidase C14A family. In terms of assembly, the active form is probably a heterodimer of the p17 subunit with either the p15 or p13 subunit which are all derived from the precursor by autocatalysis. Interacts with octameric ced-4 (two ced-3 zymogens per one ced-4 octamer); the interaction causes the autoproteolytic cleavage and activation of ced-3. Processed ced-3 also interacts with ced-4 octamer to form a stable holoenzyme. Interacts (via large subunit p17) with csp-3; the interaction prevents ced-3 autoactivation and delays ced-4-induced ced-3 processing. Interacts (via large subunit p17 or small subunit p13 or p15) with csp-2; the interaction inhibits ced-3 autoactivation. Interacts (via propeptide) with nucleoporin npp-14; the interaction tethers ced-3 to the nuclear membrane and prevents its autoprocessing in absence of ced-4. Interacts with dct-1. May form a complex composed of ced-3, ced-4 and mac-1. In terms of processing, autocatalytic cleavage removes the propeptide and generates the catalytic subunit p17 and two non-catalytic subunits p15 and p13; autoproteolysis is induced by ced-4 oligomer. Cleaved by caspase csp-1 probably at Asp-146 and Asp-376.

It localises to the nucleus membrane. Its subcellular location is the perikaryon. The protein localises to the synapse. The protein resides in the mitochondrion. It is found in the cytoplasm. It localises to the perinuclear region. The catalysed reaction is Strict requirement for an Asp residue at position P1 and has a preferred cleavage sequence of Asp-Glu-Val-Asp-|-.. Its activity is regulated as follows. Octameric ced-4 activates zymogen autoprocessing and enhances activity of processed ced-3. Zymogen autoactivation is inhibited by csp-3. csp-3 has no effect on active ced-3. Zymogen autoactivation is inhibited by csp-2. Inhibited by cysteine protease inhibitor iodoacetic acid (CH3COOI). Inhibited by benzyloxycarbonyl-DEVD-fluoro-methyl ketone (zDEVD-fmk). Inhibited by benzyloxycarbonyl-VAD-fluoro-methyl ketone (zVAD-fmk). Not inhibited by N-[N-(L-3-transcarboxirane-2-carbonyl)-leucyl]-agmatine (E-64) or by the serine and cysteine protease inhibitor L-1-chloro-3-[4-to-osylamido]-7-amino-2-heptanone (TLCK). In terms of biological role, acts as a cysteine protease in controlling programmed cell death (apoptosis) by proteolytically activating or inactivating a wide range of substrates. Component of the egl-1, ced-9, ced-4 and ced-3 apoptotic signaling cascade required for the initiation of programmed cell death in cells fated to die during embryonic and postembryonic development. During oogenesis, required for germline apoptosis downstream of ced-9 and ced-4 but independently of egl-1. By cleaving and activating ced-8, promotes phosphatidylserine exposure on the surface of apoptotic cells; phosphatidylserine is a specific marker only present at the surface of apoptotic cells and acts as a specific signal for engulfment. By cleaving and converting dcr-1 into a deoxyribonuclease (DNase), promotes apoptotic chromosomal DNA fragmentation. By cleaving mitochondrial fission protein drp-1, may regulate the removal of mitochondria during apoptosis. During germline apoptosis, cleaves translation initiation factor ifg-1 (isoform p170) promoting cap-independent translation. During male tail morphogenesis, promotes apoptosis of the tail-spike cell downstream of ced-4 but independently of egl-1 and ced-9. By cleaving cnt-1, prevents the activation of the prosurvival akt-1/2 signaling pathway and thus promotes apoptosis. Downstream of ced-4, may play a role in sex-specific cell apoptosis by cleaving sex-determining protein fem-1. May regulate germline apoptosis in response to DNA damage, probably downstream of let-60/ras and mpk-1 pathway. Cleaves ced-9 in vitro. Cleaves csp-2 isoform b resulting in the removal of the propeptide and the generation of csp-2 subunit p31 in vitro. Independently of its apoptotic role has additional functions. Probably by cleaving and thereby activating actin-severing protein gsnl-1, required for the elimination of transient presynaptic components during larval development downstream of egl-1, ced-9 and ced-4 pathway. Together with ain-1, a component of the miRNA-induced-silencing complex (miRISC), regulates temporal cell fate patterning during larval development. Acts in cell fate patterning by cleaving heterochronic protein lin-28, likely promoting its degradation. Also cleaves heterochronic protein lin-14 and exonuclease disl-2 in vitro. Downstream of calreticulin crt-1 and ced-4 and independently of egl-1 and ced-9, plays a role in the initial steps of axonal regrowth following axotomy. Cleaves 14-3-3-like protein ftt-2, tubulin tbb-2 and calreticulin crt-1 in vitro. Plays also a role in resistance to S.typhimurium-mediated infection. This is Cell death protein 3 from Caenorhabditis remanei (Caenorhabditis vulgaris).